Reading from the N-terminus, the 150-residue chain is Arginine repressor (150 aa).

The protein belongs to the ArgR family.

It is found in the cytoplasm. Its pathway is amino-acid biosynthesis; L-arginine biosynthesis [regulation]. In terms of biological role, regulates arginine biosynthesis genes. In Psychromonas ingrahamii (strain DSM 17664 / CCUG 51855 / 37), this protein is Arginine repressor.